Consider the following 92-residue polypeptide: DNA-directed RNA polymerase subunit omega (92 aa).

Belongs to the RNA polymerase subunit omega family. The RNAP catalytic core consists of 2 alpha, 1 beta, 1 beta' and 1 omega subunit. When a sigma factor is associated with the core the holoenzyme is formed, which can initiate transcription.

It carries out the reaction RNA(n) + a ribonucleoside 5'-triphosphate = RNA(n+1) + diphosphate. Promotes RNA polymerase assembly. Latches the N- and C-terminal regions of the beta' subunit thereby facilitating its interaction with the beta and alpha subunits. The sequence is that of DNA-directed RNA polymerase subunit omega from Shewanella denitrificans (strain OS217 / ATCC BAA-1090 / DSM 15013).